The following is a 1593-amino-acid chain: DNA-directed RNA polymerase subunit beta' (1593 aa).

Residues cysteine 74, cysteine 76, cysteine 89, and cysteine 92 each contribute to the Zn(2+) site. Mg(2+) contacts are provided by aspartate 648, aspartate 650, and aspartate 652. Zn(2+) is bound by residues cysteine 1026, cysteine 1100, cysteine 1107, and cysteine 1110.

Belongs to the RNA polymerase beta' chain family. In terms of assembly, the RNAP catalytic core consists of 2 alpha, 1 beta, 1 beta' and 1 omega subunit. When a sigma factor is associated with the core the holoenzyme is formed, which can initiate transcription. It depends on Mg(2+) as a cofactor. The cofactor is Zn(2+).

The catalysed reaction is RNA(n) + a ribonucleoside 5'-triphosphate = RNA(n+1) + diphosphate. DNA-dependent RNA polymerase catalyzes the transcription of DNA into RNA using the four ribonucleoside triphosphates as substrates. The chain is DNA-directed RNA polymerase subunit beta' from Endomicrobium trichonymphae.